We begin with the raw amino-acid sequence, 294 residues long: 4-hydroxy-tetrahydrodipicolinate synthase (294 aa).

Threonine 47 is a pyruvate binding site. The active-site Proton donor/acceptor is tyrosine 135. The Schiff-base intermediate with substrate role is filled by lysine 163. Isoleucine 206 contributes to the pyruvate binding site.

It belongs to the DapA family. Homodimer.

Its subcellular location is the cytoplasm. The enzyme catalyses L-aspartate 4-semialdehyde + pyruvate = (2S,4S)-4-hydroxy-2,3,4,5-tetrahydrodipicolinate + H2O + H(+). Its pathway is amino-acid biosynthesis; L-lysine biosynthesis via DAP pathway; (S)-tetrahydrodipicolinate from L-aspartate: step 3/4. Functionally, catalyzes the condensation of (S)-aspartate-beta-semialdehyde [(S)-ASA] and pyruvate to 4-hydroxy-tetrahydrodipicolinate (HTPA). This chain is 4-hydroxy-tetrahydrodipicolinate synthase, found in Staphylococcus haemolyticus (strain JCSC1435).